The primary structure comprises 1085 residues: Ubiquitin carboxyl-terminal hydrolase 36 (1085 aa).

Low complexity predominate over residues 23-36 (GGNSSAAGSSADQA). Disordered regions lie at residues 23 to 47 (GGNS…GSLQ) and 104 to 149 (KVVG…PKPK). The USP domain occupies 173 to 481 (TGMINVGNTC…NAYIMFYELD (309 aa)). The Nucleophile role is filled by C182. H440 functions as the Proton acceptor in the catalytic mechanism. 4 disordered regions span residues 489–730 (AANR…NNSK), 745–888 (KSAD…ELLK), 963–1030 (EQRQ…FYNQ), and 1043–1085 (KFNR…QQQS). The span at 503–518 (STTPVPATTVSSPSPT) shows a compositional bias: low complexity. Phosphoserine is present on residues S514 and S516. The span at 532–542 (GYSNGNAQKTA) shows a compositional bias: polar residues. Residues 588-609 (NGNKSSSTSSNNSSSSNHKSIN) are compositionally biased toward low complexity. Basic and acidic residues predominate over residues 642-651 (MTDDHTEKPK). Residues T660 and T664 each carry the phosphothreonine modification. A phosphoserine mark is found at S674 and S676. Over residues 705 to 730 (TNGHSKTNGSLTNGSASSSVHVNNSK) the composition is skewed to polar residues. S749 bears the Phosphoserine mark. A compositionally biased stretch (acidic residues) spans 749–758 (SDDDDDEEES). The segment covering 768 to 778 (PQKQSQSQSKA) has biased composition (low complexity). Pro residues predominate over residues 779-788 (PPSPKTPPSP). S781 is subject to Phosphoserine. At T784 the chain carries Phosphothreonine. S787 is subject to Phosphoserine. Residues 805–818 (EVDDIDDDDDEEEE) are compositionally biased toward acidic residues. Residues 822-844 (KIQTPSKTHRNPFSSSKPSTDSP) are compositionally biased toward polar residues. T825 bears the Phosphothreonine mark. S843 carries the phosphoserine modification. T846 bears the Phosphothreonine mark. A compositionally biased stretch (polar residues) spans 859 to 884 (PVKSHQQPRVGNGYQSEATSNGSTIN). Low complexity-rich tracts occupy residues 987-998 (SGSAKGNNASNS) and 1056-1066 (QQQRALQRHLA).

It belongs to the peptidase C19 family. As to quaternary structure, interacts with atms/PAF1, but not with CycT.

It is found in the nucleus. The protein localises to the nucleolus. The enzyme catalyses Thiol-dependent hydrolysis of ester, thioester, amide, peptide and isopeptide bonds formed by the C-terminal Gly of ubiquitin (a 76-residue protein attached to proteins as an intracellular targeting signal).. Required for maintaining multiple types of adult stem cells, including male and female germline, epithelial follicle cell and intestinal stem cells. May function as a transcriptional repressor by continually deubiquiting histone H2B at the promoters of genes critical for cellular differentiation, thereby preventing histone H3 'Lys-4' trimethylation (H3K4). Controls selective autophagy activation by ubiquitinated proteins. This chain is Ubiquitin carboxyl-terminal hydrolase 36 (Usp36), found in Drosophila erecta (Fruit fly).